The sequence spans 511 residues: GMP synthase [glutamine-hydrolyzing] (511 aa).

The 191-residue stretch at 5–195 folds into the Glutamine amidotransferase type-1 domain; sequence MILVLDFGGQ…LYNICGCKGD (191 aa). The Nucleophile role is filled by cysteine 82. Catalysis depends on residues histidine 169 and glutamate 171. Residues 196–386 enclose the GMPS ATP-PPase domain; sequence WKMSSFVENS…LGIPEDLVWR (191 aa). Position 223–229 (223–229) interacts with ATP; sequence SGGVDSS.

Homodimer.

The enzyme catalyses XMP + L-glutamine + ATP + H2O = GMP + L-glutamate + AMP + diphosphate + 2 H(+). It functions in the pathway purine metabolism; GMP biosynthesis; GMP from XMP (L-Gln route): step 1/1. Its function is as follows. Catalyzes the synthesis of GMP from XMP. The sequence is that of GMP synthase [glutamine-hydrolyzing] from Ruminiclostridium cellulolyticum (strain ATCC 35319 / DSM 5812 / JCM 6584 / H10) (Clostridium cellulolyticum).